A 564-amino-acid chain; its full sequence is Phenylalanine--tRNA ligase beta subunit (564 aa).

Residues 286-362 form the B5 domain; the sequence is YFQNTLEVSV…IGRGLDSFKP (77 aa). Mg(2+) is bound by residues aspartate 340, aspartate 346, glutamate 349, and glutamate 350.

Belongs to the phenylalanyl-tRNA synthetase beta subunit family. Type 2 subfamily. As to quaternary structure, tetramer of two alpha and two beta subunits. Mg(2+) serves as cofactor.

Its subcellular location is the cytoplasm. The enzyme catalyses tRNA(Phe) + L-phenylalanine + ATP = L-phenylalanyl-tRNA(Phe) + AMP + diphosphate + H(+). The sequence is that of Phenylalanine--tRNA ligase beta subunit from Borrelia hermsii (strain HS1 / DAH).